The chain runs to 524 residues: Caffeate CoA-transferase (524 aa).

The 5-glutamyl coenzyme A thioester intermediate role is filled by Glu-323.

This sequence belongs to the 3-oxoacid CoA-transferase family. As to quaternary structure, homodimer.

The catalysed reaction is hydrocaffeoyl-CoA + (E)-caffeate = 3-(3,4-dihydroxyphenyl)propanoate + (E)-caffeoyl-CoA. Functionally, involved in caffeate respiration, which consists in the reduction of the C-C double bond of caffeate. CarA catalyzes an energy-saving CoA loop for caffeate activation in the steady state of caffeate respiration. It catalyzes the formation of caffeyl-CoA from caffeate with hydrocaffeyl-CoA as the CoA donor via a ping-pong mechanism. In addition to caffeate, the enzyme can utilize 4-coumarate or ferulate as CoA acceptor. Neither acetyl-CoA nor butyryl-CoA served as the CoA donor. The sequence is that of Caffeate CoA-transferase from Acetobacterium woodii.